The chain runs to 345 residues: N-glycosylase/DNA lyase (345 aa).

DNA-binding residues include N149, R154, and R204. K249 (schiff-base intermediate with DNA) is an active-site residue. P266 and D268 together coordinate 8-oxoguanine. DNA is bound by residues H270 and Q287. Q315 and F319 together coordinate 8-oxoguanine. The segment covering 324 to 334 (RQSRHAQEPPA) has biased composition (basic and acidic residues). Residues 324–345 (RQSRHAQEPPAKRRKGSKGPEG) are disordered. The span at 335–345 (KRRKGSKGPEG) shows a compositional bias: basic residues.

The protein belongs to the type-1 OGG1 family. In terms of tissue distribution, ubiquitous.

The protein localises to the nucleus. It localises to the nucleoplasm. Its subcellular location is the nucleus speckle. The protein resides in the nucleus matrix. It is found in the mitochondrion. It catalyses the reaction 2'-deoxyribonucleotide-(2'-deoxyribose 5'-phosphate)-2'-deoxyribonucleotide-DNA = a 3'-end 2'-deoxyribonucleotide-(2,3-dehydro-2,3-deoxyribose 5'-phosphate)-DNA + a 5'-end 5'-phospho-2'-deoxyribonucleoside-DNA + H(+). In terms of biological role, DNA repair enzyme that incises DNA at 8-oxoG residues. Excises 7,8-dihydro-8-oxoguanine and 2,6-diamino-4-hydroxy-5-N-methylformamidopyrimidine (FAPY) from damaged DNA. Has a beta-lyase activity that nicks DNA 3' to the lesion. The protein is N-glycosylase/DNA lyase (OGG1) of Homo sapiens (Human).